The following is a 324-amino-acid chain: Olfactory receptor 52I1 (324 aa).

At 1–29 (MLGPAYNHTMETPASFLLVGIPGLQSSHL) the chain is on the extracellular side. N-linked (GlcNAc...) asparagine glycosylation occurs at Asn7. Residues 30-50 (WLAISLSAMYITALLGNTLIV) traverse the membrane as a helical segment. Residues 51–58 (TAIWMDST) are Cytoplasmic-facing. Residues 59–79 (RHEPMYCFLCVLAAVDIVMAS) form a helical membrane-spanning segment. The Extracellular portion of the chain corresponds to 80 to 103 (SVVPKMVSIFCSGDSSISFSACFT). A disulfide bond links Cys101 and Cys193. Residues 104 to 124 (QMFFVHLATAVETGLLLTMAF) traverse the membrane as a helical segment. At 125-143 (DRYVAICKPLHYKRILTPQ) the chain is on the cytoplasmic side. Residues 144–164 (VMLGMSMAVTIRAVTFMTPLS) traverse the membrane as a helical segment. Residues 165 to 200 (WMMNHLPFCGSNVVVHSYCKHIALARLACADPVPSS) lie on the Extracellular side of the membrane. A helical transmembrane segment spans residues 201–221 (LYSLIGSSLMVGSDVAFIAAS). Residues 222–241 (YILILRAVFDLSSKTAQLKA) are Cytoplasmic-facing. The helical transmembrane segment at 242 to 262 (LSTCGSHVGVMALYYLPGMAS) threads the bilayer. Residues 263–278 (IYAAWLGQDIVPLHTQ) are Extracellular-facing. A helical membrane pass occupies residues 279-299 (VLLADLYVIIPATLNPIIYGM). The Cytoplasmic portion of the chain corresponds to 300–324 (RTKQLLEGIWSYLMHFLFDHSNLGS).

The protein belongs to the G-protein coupled receptor 1 family.

It is found in the cell membrane. Functionally, odorant receptor. The polypeptide is Olfactory receptor 52I1 (OR52I1) (Homo sapiens (Human)).